The primary structure comprises 647 residues: Zinc transporter ZIP4 (647 aa).

Positions 1-22 (MASLVSLELGLLLAVLVVTATA) are cleaved as a signal peptide. At 23 to 327 (SPPAGLLSLL…QDQLSQSERY (305 aa)) the chain is on the extracellular side. 3 cysteine pairs are disulfide-bonded: C57–C62, C65–C111, and C160–C195. Positions 236 to 255 (EAHSDHSHRHRGASSRDPVP) are disordered. N-linked (GlcNAc...) asparagine glycosylation is present at N261. A disulfide bridge connects residues C270 and C309. A helical membrane pass occupies residues 328 to 348 (LYGSLATLLICLCAVFGLLLL). The Cytoplasmic segment spans residues 349-359 (TCTGCRGVTHY). The chain crosses the membrane as a helical span at residues 360 to 380 (ILQTFLSLAVGAVTGDAVLHL). Topologically, residues 381–402 (TPKVLGLHTHSEEGLSPQPTWR) are extracellular. The chain crosses the membrane as a helical span at residues 403–423 (LLAMLAGLYAFFLFENLFNLL). Residues 424–498 (LPRDPEDLED…LSPELRLLPY (75 aa)) lie on the Cytoplasmic side of the membrane. Residues 452–454 (LQL) carry the Essential for SLC39A4 endocytosis motif. The interval 458 to 484 (ELRQPKPPHEGSRADLVAEESPELLNP) is disordered. The segment covering 460-470 (RQPKPPHEGSR) has biased composition (basic and acidic residues). A helical transmembrane segment spans residues 499-518 (MITLGDAVHNFADGLAVGAA). Positions 507, 508, and 511 each coordinate Zn(2+). The Extracellular portion of the chain corresponds to 519–526 (FASSWKTG). Residues 527-553 (LATSLAVFCHELPHELGDFAALLHAGL) form a helical membrane-spanning segment. Positions 536, 537, and 540 each coordinate Zn(2+). The Cytoplasmic segment spans residues 554–558 (SVRQA). The chain crosses the membrane as a helical span at residues 559 to 579 (LLLNLASALTAFAGLYVALAV). The Extracellular portion of the chain corresponds to 580-586 (GVSEESE). The helical transmembrane segment at 587-607 (AWILAVATGLFLYVALCDMLP) threads the bilayer. Topologically, residues 608 to 617 (AMLKVRDPRP) are cytoplasmic. The helical transmembrane segment at 618–638 (WLLFLLHNVGLLGGWTVLLLL) threads the bilayer. At 639–647 (SLYEDDITF) the chain is on the extracellular side.

Belongs to the ZIP transporter (TC 2.A.5) family. As to quaternary structure, homodimer; homodimerization is mediated by the transmembrane domain. In terms of processing, the extracellular N-terminal ectodomain is cleaved when cells are Zn(2+) deficient, N-terminally cleaved SLC39A4 is internalized at a faster rate. Post-translationally, under excess Zn(2+) conditions, SLC39A4 on the cell surface is rapidly endocytosed, ubiquitinated and degraded. Glycosylated. As to expression, highly expressed in kidney, small intestine, stomach, colon, jejunum and duodenum.

Its subcellular location is the cell membrane. The protein localises to the recycling endosome membrane. The protein resides in the apical cell membrane. It carries out the reaction Zn(2+)(in) = Zn(2+)(out). The Zn(2+) uniporter activity is regulated by zinc availability. Extracellular acidification stimulated SLC39A4-dependent Zn(2+) uptake. Its function is as follows. Selective transporter that mediates the uptake of Zn(2+). Plays an essential role for dietary zinc uptake from small intestine. The Zn(2+) uniporter activity is regulated by zinc availability. Also exhibits polyspecific binding and transport of Cu(2+), Cd(2+) and possibly Ni(2+) but at higher concentrations. The polypeptide is Zinc transporter ZIP4 (Homo sapiens (Human)).